The sequence spans 1237 residues: Tyrosine-protein kinase sid-3 (1237 aa).

The Protein kinase domain occupies Ile107–Leu369. ATP-binding positions include Ile113–Val121 and Lys139. Asp230 (proton acceptor) is an active-site residue. The SH3 domain maps to Ala366–Asn426. Disordered stretches follow at residues Asn683–Asn704, Pro741–Gln802, Ile826–Arg919, Ser940–Ile986, Ser999–Pro1018, and Gln1134–Ser1156. 3 stretches are compositionally biased toward polar residues: residues Gln749–Lys766, Lys778–Phe791, and Ser847–Ser863. Low complexity-rich tracts occupy residues Thr881 to Thr910 and Ser940 to Ala961. The segment covering Ala1138–Ser1156 has biased composition (low complexity).

The protein belongs to the protein kinase superfamily. Tyr protein kinase family. SYK/ZAP-70 subfamily. In terms of tissue distribution, ubiquitously present in all tissues tested. Expressed in the somatic cells of gut, pharynx, body wall muscle, neurons, skin and excretory canal cells.

Its subcellular location is the cytoplasm. The catalysed reaction is L-tyrosyl-[protein] + ATP = O-phospho-L-tyrosyl-[protein] + ADP + H(+). Its function is as follows. Tyrosine-protein kinase which plays a role in RNA-mediated gene silencing by mediating import of double-stranded RNA (dsRNA) into cells. Not required for import of ingested dsRNA into intestinal cells but involved in subsequent export from intestinal cells to internal tissues. In Caenorhabditis elegans, this protein is Tyrosine-protein kinase sid-3 (sid-3).